A 549-amino-acid polypeptide reads, in one-letter code: Cytoplasmic trehalase (549 aa).

Substrate-binding positions include R168, 175 to 176, N212, 221 to 223, 292 to 294, and G324; these read WD, RSQ, and RDE. Active-site proton donor/acceptor residues include D326 and E509. E525 serves as a coordination point for substrate.

It belongs to the glycosyl hydrolase 37 family. As to quaternary structure, monomer.

The protein resides in the cytoplasm. The catalysed reaction is alpha,alpha-trehalose + H2O = alpha-D-glucose + beta-D-glucose. Its pathway is glycan degradation; trehalose degradation; D-glucose from alpha,alpha-trehalose: step 1/1. Functionally, hydrolyzes trehalose to glucose. Could be involved, in cells returning to low osmolarity conditions, in the utilization of the accumulated cytoplasmic trehalose, which was synthesized in response to high osmolarity. This is Cytoplasmic trehalase from Escherichia fergusonii (strain ATCC 35469 / DSM 13698 / CCUG 18766 / IAM 14443 / JCM 21226 / LMG 7866 / NBRC 102419 / NCTC 12128 / CDC 0568-73).